A 248-amino-acid polypeptide reads, in one-letter code: 1-(5-phosphoribosyl)-5-[(5-phosphoribosylamino)methylideneamino] imidazole-4-carboxamide isomerase (248 aa).

The Proton acceptor role is filled by Asp7. Residue Asp129 is the Proton donor of the active site.

Belongs to the HisA/HisF family.

The protein localises to the cytoplasm. The enzyme catalyses 1-(5-phospho-beta-D-ribosyl)-5-[(5-phospho-beta-D-ribosylamino)methylideneamino]imidazole-4-carboxamide = 5-[(5-phospho-1-deoxy-D-ribulos-1-ylimino)methylamino]-1-(5-phospho-beta-D-ribosyl)imidazole-4-carboxamide. It functions in the pathway amino-acid biosynthesis; L-histidine biosynthesis; L-histidine from 5-phospho-alpha-D-ribose 1-diphosphate: step 4/9. This Aeromonas salmonicida (strain A449) protein is 1-(5-phosphoribosyl)-5-[(5-phosphoribosylamino)methylideneamino] imidazole-4-carboxamide isomerase.